The following is a 497-amino-acid chain: Validamine 7-phosphate valienyltransferase (497 aa).

A GDP-valienol-binding site is contributed by Asp158. His182 serves as a coordination point for validamine 7-phosphate. Residues Arg290, Lys295, Arg321, 325 to 326 (NR), 361 to 362 (ND), and Thr366 each bind GDP-valienol. 383–386 (DGQN) is a validamine 7-phosphate binding site. Residues 387-388 (LS) and Glu391 contribute to the GDP-valienol site.

The protein belongs to the glycosyltransferase 20 family. In terms of assembly, homodimer.

It catalyses the reaction validamine 7-phosphate + GDP-valienol = validoxylamine A 7'-phosphate + GDP + H(+). Functionally, involved in the biosynthesis of the antifungal agent validamycin A. Catalyzes the condensation between GDP-valienol and validamine 7-phosphate via a nonglycosidic C-N bond formation to yield validoxylamine A 7'-phosphate. The protein is Validamine 7-phosphate valienyltransferase of Streptomyces hygroscopicus subsp. limoneus.